The primary structure comprises 590 residues: Pescadillo homolog (590 aa).

The BRCT domain occupies 332-422 (VCKSLFKDLK…IILPTEKYLV (91 aa)). A disordered region spans residues 561-590 (AMKISQSRKRSGVEIIEQRKKRLNDTQPSS).

It belongs to the pescadillo family. As to quaternary structure, interacts with BOP1 and WDR12. Interacts with NSN1. As to expression, expressed in shoot and root apical meristems, epidermal cells and vasculature of developing leaves, trichome progenitor cells, young flowers, developing pollen grains and ovules, and mature pollen grains.

It is found in the nucleus. The protein localises to the nucleolus. It localises to the nucleoplasm. In terms of biological role, required for maturation of ribosomal RNAs and formation of the large ribosomal subunit. Plays an essential role in cell growth and survival through its regulation of ribosome biogenesis and mitotic progression. Required for normal root cell growth and differentiation. The sequence is that of Pescadillo homolog from Arabidopsis thaliana (Mouse-ear cress).